Consider the following 296-residue polypeptide: Protein FAM110A (296 aa).

Disordered regions lie at residues 61–97 (NTRQEPVQPPLVRQPLFSPGPRGPVLTPSRRVLPCSG) and 117–192 (PVSP…KSDL). Pro residues-rich tracts occupy residues 139-148 (PATPPRPPPS) and 161-170 (PASPARPYPS).

Belongs to the FAM110 family. As to quaternary structure, may interact with CSPP1.

It localises to the cytoplasm. Its subcellular location is the cytoskeleton. It is found in the microtubule organizing center. The protein localises to the centrosome. The protein resides in the spindle pole. The sequence is that of Protein FAM110A (Fam110a) from Mus musculus (Mouse).